We begin with the raw amino-acid sequence, 367 residues long: Peptide chain release factor 2 (367 aa).

Residue glutamine 254 is modified to N5-methylglutamine.

Belongs to the prokaryotic/mitochondrial release factor family. Methylated by PrmC. Methylation increases the termination efficiency of RF2.

It localises to the cytoplasm. Peptide chain release factor 2 directs the termination of translation in response to the peptide chain termination codons UGA and UAA. The sequence is that of Peptide chain release factor 2 from Burkholderia mallei (strain ATCC 23344).